The chain runs to 347 residues: N-acetyl-gamma-glutamyl-phosphate reductase (347 aa).

Residue Cys-155 is part of the active site.

Belongs to the NAGSA dehydrogenase family. Type 1 subfamily.

It localises to the cytoplasm. The catalysed reaction is N-acetyl-L-glutamate 5-semialdehyde + phosphate + NADP(+) = N-acetyl-L-glutamyl 5-phosphate + NADPH + H(+). Its pathway is amino-acid biosynthesis; L-arginine biosynthesis; N(2)-acetyl-L-ornithine from L-glutamate: step 3/4. Functionally, catalyzes the NADPH-dependent reduction of N-acetyl-5-glutamyl phosphate to yield N-acetyl-L-glutamate 5-semialdehyde. This is N-acetyl-gamma-glutamyl-phosphate reductase from Akkermansia muciniphila (strain ATCC BAA-835 / DSM 22959 / JCM 33894 / BCRC 81048 / CCUG 64013 / CIP 107961 / Muc).